Consider the following 638-residue polypeptide: MPNIKLPDGSVRSFDHPVTVAEVAASIGSGLAKAALAGRVDGKAVDLSYCIERDSELAILTDKSAEGVDVIRHSTAHLLAHAVKELFPEAQVTIGPVIENGFYYDFSYKRPFTPEDLEAIEKRMAELVKRELPVEREVWPRDKAVAFFKSIGEHYKAEIIASIPANEDVSLYRQGEFVDLCRGPHVPSTGRLKVFKLTKLAGAYWRGDAKNEMLQRVYGTAWAKKEDLESYLHMLEEAEKRDHRKLGRQLDLFHIQEEAPGMVFWHAKGWTLWQQVEQYLRGTISRHGYQEVRTPQIVDRSLWEKSGHWGMYSDLMFTTQSEKHDYAVKPMNCPCHIQIFNQGLKSYRDLPLRMAEFGSCHRNEPSGSLHGIMRVRNFVQDDAHIFCTDEQVQEEAAAFIALLQKVYADFGFRDIQIKLSTRPEKRVGADEQWDAAEAALAAALKAQGLEYELQPGEGAFYGPKIEFSLKDCLNRVWQCGTLQLDFNLPVRLGAEYVAEDNTKKFPVMLHRAIVGSLERFIGILIEHYAGAMPLWLAPVHAVVMNISEGQADYATEVVNRLREAGFRVEADLRNEKINYKIREHSVHKLPYQLVVGEKEKAAGVVAVRVRGGQDLGQLSLDKLIERWNGELASRSGPV.

The TGS domain occupies 1 to 61; that stretch reads MPNIKLPDGS…ERDSELAILT (61 aa). The segment at 242 to 533 is catalytic; that stretch reads DHRKLGRQLD…LIEHYAGAMP (292 aa). Residues C333, H384, and H510 each contribute to the Zn(2+) site.

It belongs to the class-II aminoacyl-tRNA synthetase family. As to quaternary structure, homodimer. Requires Zn(2+) as cofactor.

Its subcellular location is the cytoplasm. The catalysed reaction is tRNA(Thr) + L-threonine + ATP = L-threonyl-tRNA(Thr) + AMP + diphosphate + H(+). Catalyzes the attachment of threonine to tRNA(Thr) in a two-step reaction: L-threonine is first activated by ATP to form Thr-AMP and then transferred to the acceptor end of tRNA(Thr). Also edits incorrectly charged L-seryl-tRNA(Thr). The polypeptide is Threonine--tRNA ligase (Azoarcus sp. (strain BH72)).